A 329-amino-acid polypeptide reads, in one-letter code: Phosphate acyltransferase (329 aa).

Belongs to the PlsX family. In terms of assembly, homodimer. Probably interacts with PlsY.

The protein localises to the cytoplasm. The enzyme catalyses a fatty acyl-[ACP] + phosphate = an acyl phosphate + holo-[ACP]. Its pathway is lipid metabolism; phospholipid metabolism. Functionally, catalyzes the reversible formation of acyl-phosphate (acyl-PO(4)) from acyl-[acyl-carrier-protein] (acyl-ACP). This enzyme utilizes acyl-ACP as fatty acyl donor, but not acyl-CoA. This is Phosphate acyltransferase from Exiguobacterium sp. (strain ATCC BAA-1283 / AT1b).